The following is a 223-amino-acid chain: Urease accessory protein UreF (223 aa).

It belongs to the UreF family. UreD, UreF and UreG form a complex that acts as a GTP-hydrolysis-dependent molecular chaperone, activating the urease apoprotein by helping to assemble the nickel containing metallocenter of UreC. The UreE protein probably delivers the nickel.

Its subcellular location is the cytoplasm. Functionally, required for maturation of urease via the functional incorporation of the urease nickel metallocenter. The sequence is that of Urease accessory protein UreF from Rhizobium etli (strain ATCC 51251 / DSM 11541 / JCM 21823 / NBRC 15573 / CFN 42).